Consider the following 365-residue polypeptide: 4-hydroxy-tetrahydrodipicolinate synthase 1, chloroplastic (365 aa).

The transit peptide at 1-39 (MSALKNYGLISIDSALHFPRSNQLQSYKRRNAKWVSPIA) directs the protein to the chloroplast. Thr-108 is a pyruvate binding site. Tyr-194 acts as the Proton donor/acceptor in catalysis. Lys-222 functions as the Schiff-base intermediate with substrate in the catalytic mechanism. Ile-261 contributes to the pyruvate binding site.

It belongs to the DapA family.

The protein resides in the plastid. It localises to the chloroplast. The enzyme catalyses L-aspartate 4-semialdehyde + pyruvate = (2S,4S)-4-hydroxy-2,3,4,5-tetrahydrodipicolinate + H2O + H(+). It participates in amino-acid biosynthesis; L-lysine biosynthesis via DAP pathway; (S)-tetrahydrodipicolinate from L-aspartate: step 3/4. Its function is as follows. Catalyzes the condensation of (S)-aspartate-beta-semialdehyde [(S)-ASA] and pyruvate to 4-hydroxy-tetrahydrodipicolinate (HTPA). This is 4-hydroxy-tetrahydrodipicolinate synthase 1, chloroplastic (DHDPS1) from Arabidopsis thaliana (Mouse-ear cress).